The chain runs to 309 residues: RING finger protein mug145 (309 aa).

A helical transmembrane segment spans residues 23–43 (ILLFALVIILSVIFINFFFFY). The RING-type; atypical zinc-finger motif lies at 205–247 (CIICYADYAFDDILRVLPCEHVFHTQCIDTWMTTMKASCPLCN).

It localises to the membrane. In terms of biological role, has a role in meiosis. The protein is RING finger protein mug145 (mug145) of Schizosaccharomyces pombe (strain 972 / ATCC 24843) (Fission yeast).